The sequence spans 330 residues: Aspartate--ammonia ligase (330 aa).

The protein belongs to the class-II aminoacyl-tRNA synthetase family. AsnA subfamily.

The protein resides in the cytoplasm. It catalyses the reaction L-aspartate + NH4(+) + ATP = L-asparagine + AMP + diphosphate + H(+). It functions in the pathway amino-acid biosynthesis; L-asparagine biosynthesis; L-asparagine from L-aspartate (ammonia route): step 1/1. The chain is Aspartate--ammonia ligase from Streptococcus uberis (strain ATCC BAA-854 / 0140J).